Reading from the N-terminus, the 552-residue chain is MEKVKQTIRAPRGTELQTKGWVQEAALRMLMNNLDPEVAEKPEELVVYGGIGRAARNWESYQAIVDSLKTLESDETLLVQSGKPVAIFKSHEDAPRVLLANSNLVPKWANWDHFRELEKKGLMMYGQMTAGSWIYIGTQGILQGTYETFGEAARQHFGGSLKGTLTLTAGLGGMGGAQPLAVTMNGGVVIAIDVDKRSIDRRIEKRYCDMYTESLEEALAVANEYKEKKEPISIGLLGNAAEILPELVKRNITPDLVTDQTSAHDPLNGYIPVGYTLEEAAKLREEDPERYVQLSKESMTKHVEAMLAMQEKGAITFDYGNNIRQVAFDEGLKNAFDFPGFVPAFIRPLFCEGKGPFRWVALSGDPEDIYKTDEVILREFADNEHLCNWIRMARQQVEFQGLPSRICWLGYGERAKFGRIINEMVANGELSAPIVIGRDHLDCGSVASPNRETEAMKDGSDSVADWPILNALINSVNGASWVSVHHGGGVGMGYSLHAGMVIVADGTEAAAKRIERVLTSDPGMGVVRHVDAGYDLAVETAKEKGVNIPMMK.

NAD(+) is bound by residues 49–50 (GG), Gln127, 173–175 (GMG), Asp193, 239–240 (NA), 260–264 (QTSAH), 270–271 (YI), and Tyr319. Cys407 is a catalytic residue. Gly489 serves as a coordination point for NAD(+).

It belongs to the urocanase family. Requires NAD(+) as cofactor.

It localises to the cytoplasm. The catalysed reaction is 4-imidazolone-5-propanoate = trans-urocanate + H2O. It functions in the pathway amino-acid degradation; L-histidine degradation into L-glutamate; N-formimidoyl-L-glutamate from L-histidine: step 2/3. Its function is as follows. Catalyzes the conversion of urocanate to 4-imidazolone-5-propionate. This is Urocanate hydratase from Bacillus anthracis (strain CDC 684 / NRRL 3495).